Reading from the N-terminus, the 216-residue chain is Probable GTP-binding protein EngB (216 aa).

The EngB-type G domain maps to 30–204; that stretch reads SGLEVAFAGR…QMVLAGWLDL (175 aa). GTP contacts are provided by residues 38–45, 64–68, 82–85, 149–152, and 182–185; these read GRSNAGKS, GRTQL, DLPG, TKAD, and LFSA. S45 and T66 together coordinate Mg(2+).

This sequence belongs to the TRAFAC class TrmE-Era-EngA-EngB-Septin-like GTPase superfamily. EngB GTPase family. It depends on Mg(2+) as a cofactor.

Necessary for normal cell division and for the maintenance of normal septation. The sequence is that of Probable GTP-binding protein EngB from Ectopseudomonas mendocina (strain ymp) (Pseudomonas mendocina).